Here is a 326-residue protein sequence, read N- to C-terminus: Acyl-CoA-binding domain-containing protein 4 (326 aa).

The ACB domain maps to 10 to 99 (CQKQFQAAVS…MKLVAQKVID (90 aa)). An acyl-CoA is bound by residues 21-30 (IQNLPKNGSY), 41-45 (YSYYK), lysine 67, and tyrosine 86. Disordered regions lie at residues 147–170 (VQAA…SRLP) and 223–248 (KEAA…SLMG). Serine 164 carries the post-translational modification Phosphoserine.

In terms of biological role, binds medium- and long-chain acyl-CoA esters and may function as an intracellular carrier of acyl-CoA esters. This is Acyl-CoA-binding domain-containing protein 4 (Acbd4) from Rattus norvegicus (Rat).